The chain runs to 358 residues: Insulin gene enhancer protein isl-2b (358 aa).

2 LIM zinc-binding domains span residues Cys27 to Asp80 and Cys89 to His143. The segment at residues Thr191–Ser250 is a DNA-binding region (homeobox). The span at Glu325–Ser335 shows a compositional bias: low complexity. Residues Glu325–Thr358 form a disordered region. Residues Asp336 to Thr358 show a composition bias toward polar residues.

The protein localises to the nucleus. In terms of biological role, binds to one of the cis-acting domain of the insulin gene enhancer. May be involved in the regional specification of the myotome and also in target recognition by the caudal primary neuron. The polypeptide is Insulin gene enhancer protein isl-2b (isl2b) (Danio rerio (Zebrafish)).